Reading from the N-terminus, the 326-residue chain is Protein BugT (326 aa).

An N-terminal signal peptide occupies residues Met-1–Ala-25.

It belongs to the UPF0065 (bug) family.

It is found in the periplasm. This is Protein BugT (bugT) from Bordetella pertussis (strain Tohama I / ATCC BAA-589 / NCTC 13251).